Here is a 192-residue protein sequence, read N- to C-terminus: Chromophore lyase CpcS/CpeS 2 (192 aa).

Belongs to the CpcS/CpeS biliprotein lyase family.

Its function is as follows. Covalently attaches a chromophore to Cys residue(s) of phycobiliproteins. This chain is Chromophore lyase CpcS/CpeS 2, found in Synechocystis sp. (strain ATCC 27184 / PCC 6803 / Kazusa).